Consider the following 243-residue polypeptide: Ubiquinone/menaquinone biosynthesis C-methyltransferase UbiE (243 aa).

Residues T69, D90, and 116 to 117 (DA) each bind S-adenosyl-L-methionine.

This sequence belongs to the class I-like SAM-binding methyltransferase superfamily. MenG/UbiE family.

It catalyses the reaction a 2-demethylmenaquinol + S-adenosyl-L-methionine = a menaquinol + S-adenosyl-L-homocysteine + H(+). It carries out the reaction a 2-methoxy-6-(all-trans-polyprenyl)benzene-1,4-diol + S-adenosyl-L-methionine = a 5-methoxy-2-methyl-3-(all-trans-polyprenyl)benzene-1,4-diol + S-adenosyl-L-homocysteine + H(+). The protein operates within quinol/quinone metabolism; menaquinone biosynthesis; menaquinol from 1,4-dihydroxy-2-naphthoate: step 2/2. It participates in cofactor biosynthesis; ubiquinone biosynthesis. In terms of biological role, methyltransferase required for the conversion of demethylmenaquinol (DMKH2) to menaquinol (MKH2) and the conversion of 2-polyprenyl-6-methoxy-1,4-benzoquinol (DDMQH2) to 2-polyprenyl-3-methyl-6-methoxy-1,4-benzoquinol (DMQH2). This chain is Ubiquinone/menaquinone biosynthesis C-methyltransferase UbiE, found in Cupriavidus taiwanensis (strain DSM 17343 / BCRC 17206 / CCUG 44338 / CIP 107171 / LMG 19424 / R1) (Ralstonia taiwanensis (strain LMG 19424)).